A 282-amino-acid polypeptide reads, in one-letter code: Hepatitis A virus cellular receptor 2 homolog (282 aa).

The signal sequence occupies residues 1–21 (MFSWLPFSCALLLLQPLPARS). The region spanning 22-131 (LENAYTAEVG…EKLELKLSIT (110 aa)) is the Ig-like V-type domain. At 22-194 (LENAYTAEVG…KDSGETIRTA (173 aa)) the chain is on the extracellular side. 3 disulfides stabilise this stretch: Cys38–Cys111, Cys52–Cys63, and Cys58–Cys110. Position 62 (Gln62) interacts with a 1,2-diacyl-sn-glycero-3-phospho-L-serine. 2 N-linked (GlcNAc...) asparagine glycosylation sites follow: Asn74 and Asn100. Position 112 (Arg112) interacts with a 1,2-diacyl-sn-glycero-3-phospho-L-serine. Residues Phe115 and Gly117 each coordinate Ca(2+). Met119 contacts a 1,2-diacyl-sn-glycero-3-phospho-L-serine. Residue Asn120 coordinates Ca(2+). The interval 138-163 (PAGTAHGDSTTASPRTLTTEGSGSET) is disordered. The segment covering 144-163 (GDSTTASPRTLTTEGSGSET) has biased composition (polar residues). O-linked (GalNAc...) threonine glycosylation occurs at Thr147. An N-linked (GlcNAc...) asparagine glycan is attached at Asn173. Residues 195–215 (VHIGVGVSAGLALALILGVLI) traverse the membrane as a helical segment. At 216-282 (LKWYSSKKKK…YCYVSSQQPS (67 aa)) the chain is on the cytoplasmic side. The segment at 253–271 (EENIYTIEENIYEMENSNE) is interaction with BAG6. Tyr257 carries the post-translational modification Phosphotyrosine; by ITK.

This sequence belongs to the immunoglobulin superfamily. TIM family. In terms of assembly, interacts with HMGB1; impairs HMGB1 binding to B-DNA and likely HMGB1-mediated innate immune response. Interacts with BAG6. Interacts (phosphorylated) with PIK3R1 and PIK3R2. Interacts (not dependent on its phosphorylation status) with FYN. Interacts (in basal state T-cells) with VAV1; AKT1/2, LCP2, ZAP70, SYK, PIK3R1, FYN, SH3BP2 and SH2D2A. Interacts (in activated T-cells) with LCK and PLCG. Interacts with ILF3; this interaction promotes ILF3 ubiquitination and degradation.

The protein localises to the membrane. It is found in the cell junction. Cell surface receptor implicated in modulating innate and adaptive immune responses. Generally accepted to have an inhibiting function. Reports on stimulating functions suggest that the activity may be influenced by the cellular context and/or the respective ligand. Regulates macrophage activation. Inhibits T-helper type 1 lymphocyte (Th1)-mediated auto- and alloimmune responses and promotes immunological tolerance. In CD8+ cells attenuates TCR-induced signaling, specifically by blocking NF-kappaB and NFAT promoter activities resulting in the loss of IL-2 secretion. The function may implicate its association with LCK proposed to impair phosphorylation of TCR subunits. In contrast, shown to activate TCR-induced signaling in T-cells probably implicating ZAP70, LCP2, LCK and FYN. Expressed on Treg cells can inhibit Th17 cell responses. Receptor for LGALS9. Binding to LGALS9 is believed to result in suppression of T-cell responses; the resulting apoptosis of antigen-specific cells may implicate HAVCR2 phosphorylation and disruption of its association with BAG6. Binding to LGALS9 is proposed to be involved in innate immune response to intracellular pathogens. Expressed on Th1 cells interacts with LGALS9 expressed on Mycobacterium tuberculosis-infected macrophages to stimulate antibactericidal activity including IL-1 beta secretion and to restrict intracellular bacterial growth. However, the function as receptor for LGALS9 has been challenged. Also reported to enhance CD8+ T cell responses to an acute infection such as by Listeria monocytogenes. Receptor for phosphatidylserine (PtSer); PtSer-binding is calcium-dependent. May recognize PtSer on apoptotic cells leading to their phagocytosis. Mediates the engulfment of apoptotic cells by dendritic cells. Expressed on T-cells, promotes conjugation but not engulfment of apoptotic cells. Expressed on dendritic cells (DCs) positively regulates innate immune response and in synergy with Toll-like receptors promotes secretion of TNF-alpha. In tumor-imfiltrating DCs suppresses nucleic acid-mediated innate immune repsonse by interaction with HMGB1 and interfering with nucleic acid-sensing and trafficking of nucleid acids to endosomes. Can enhance mast cell production of Th2 cytokines Il-4, IL-6 and IL-13. Expressed on natural killer (NK) cells acts as a coreceptor to enhance IFN-gamma production in response to LGALS9. In contrast, shown to suppress NK cell-mediated cytotoxicity. Negatively regulates NK cell function in LPS-induced endotoxic shock. This is Hepatitis A virus cellular receptor 2 homolog (Havcr2) from Rattus norvegicus (Rat).